The following is a 651-amino-acid chain: UvrABC system protein B (651 aa).

Residues 25–411 enclose the Helicase ATP-binding domain; the sequence is RGISCGAKEQ…TGGVATEQLI (387 aa). 38–45 contributes to the ATP binding site; the sequence is GVTGSGKT. The Beta-hairpin signature appears at 91 to 114; that stretch reads YYDYYQPEAYIPQSDVYIEKDALI. One can recognise a Helicase C-terminal domain in the interval 427 to 591; it reads DGQIHDVMCE…IVPRTIQKPV (165 aa). The interval 593–615 is disordered; that stretch reads TSLSERVGSSRKKVSRDTNTDPA. The region spanning 616–651 is the UVR domain; sequence NRDIVELQKEMLLCAENLDFERAVEIRNEIKRLTAP.

The protein belongs to the UvrB family. As to quaternary structure, forms a heterotetramer with UvrA during the search for lesions. Interacts with UvrC in an incision complex.

Its subcellular location is the cytoplasm. Functionally, the UvrABC repair system catalyzes the recognition and processing of DNA lesions. A damage recognition complex composed of 2 UvrA and 2 UvrB subunits scans DNA for abnormalities. Upon binding of the UvrA(2)B(2) complex to a putative damaged site, the DNA wraps around one UvrB monomer. DNA wrap is dependent on ATP binding by UvrB and probably causes local melting of the DNA helix, facilitating insertion of UvrB beta-hairpin between the DNA strands. Then UvrB probes one DNA strand for the presence of a lesion. If a lesion is found the UvrA subunits dissociate and the UvrB-DNA preincision complex is formed. This complex is subsequently bound by UvrC and the second UvrB is released. If no lesion is found, the DNA wraps around the other UvrB subunit that will check the other stand for damage. The polypeptide is UvrABC system protein B (Anaplasma marginale (strain St. Maries)).